The following is a 249-amino-acid chain: 2,3-bisphosphoglycerate-dependent phosphoglycerate mutase (249 aa).

Substrate is bound by residues 8–15 (RHGESAWN), 21–22 (TG), Arg-60, 87–90 (ERHY), Lys-98, 114–115 (RR), and 183–184 (GN). The active-site Tele-phosphohistidine intermediate is His-9. The active-site Proton donor/acceptor is the Glu-87.

This sequence belongs to the phosphoglycerate mutase family. BPG-dependent PGAM subfamily.

The enzyme catalyses (2R)-2-phosphoglycerate = (2R)-3-phosphoglycerate. Its pathway is carbohydrate degradation; glycolysis; pyruvate from D-glyceraldehyde 3-phosphate: step 3/5. Its function is as follows. Catalyzes the interconversion of 2-phosphoglycerate and 3-phosphoglycerate. The chain is 2,3-bisphosphoglycerate-dependent phosphoglycerate mutase from Methanosphaerula palustris (strain ATCC BAA-1556 / DSM 19958 / E1-9c).